The chain runs to 767 residues: General transcription and DNA repair factor IIH helicase/translocase subunit XPB1 (767 aa).

A disordered region spans residues 1-51 (MGNGERGRPNKKMKYGGKDDQKMKNIQNAEDYYDDADEDSRDGEGEEKKRD). The span at 31-41 (DYYDDADEDSR) shows a compositional bias: acidic residues. Over residues 42 to 51 (DGEGEEKKRD) the composition is skewed to basic and acidic residues. Residues 293 to 455 (MFGNGRARSG…DLNFLIGPKL (163 aa)) form the Helicase ATP-binding domain. Position 306 to 313 (306 to 313 (LPCGAGKS)) interacts with ATP. A DEVH box motif is present at residues 408-411 (DEVH). Positions 510–676 (RACEFLIRFH…SLPPPDAGSS (167 aa)) constitute a Helicase C-terminal domain. Residues 742-767 (RHKSGQQFKKPKDPTKRHNLFKKRYV) are disordered. Residues 750 to 766 (KKPKDPTKRHNLFKKRY) carry the Nuclear localization signal motif. Residues 758 to 767 (RHNLFKKRYV) are compositionally biased toward basic residues.

It belongs to the helicase family. RAD25/XPB subfamily. Component of the 7-subunit TFIIH core complex composed of XPB, XPD, TFB1/GTF2H1, GTF2H2/P44, TFB4/GTF2H3, TFB2/GTF2H4 and TFB5/GTF2H5, which is active in NER. The core complex associates with the 3-subunit CDK-activating kinase (CAK) module composed of CYCH1/cyclin H1, CDKD and MAT1/At4g30820 to form the 10-subunit holoenzyme (holo-TFIIH) active in transcription. Expressed ubiquitously.

It localises to the nucleus. The catalysed reaction is Couples ATP hydrolysis with the unwinding of duplex DNA by translocating in the 3'-5' direction.. It carries out the reaction ATP + H2O = ADP + phosphate + H(+). In terms of biological role, ATP-dependent 3'-5' DNA helicase/translocase; binds dsDNA rather than ssDNA, unzipping it in a translocase rather than classical helicase activity. Component of the general transcription and DNA repair factor IIH (TFIIH) core complex. When complexed to CDK-activating kinase (CAK), involved in RNA transcription by RNA polymerase II. The ATPase activity of XPB/ERCC3, but not its helicase activity, is required for DNA opening; it may wrap around the damaged DNA wedging it open, causing localized melting and twisting that allows XPD/ERCC2 helicase to anchor. The ATP-dependent helicase activity of XPB/ERCC3 may be required for promoter escape. Also involved in transcription-coupled nucleotide excision repair (NER) of damaged DNA. In NER, TFIIH acts by opening DNA around the lesion to allow the excision of the damaged oligonucleotide and its replacement by a new DNA fragment. The structure of the TFIIH transcription complex differs from the NER-TFIIH complex. Partially complements UV sensitivity of a yeast SSL2 mutation. Required during the early stages of development, including seed germination. The chain is General transcription and DNA repair factor IIH helicase/translocase subunit XPB1 (XPB1) from Arabidopsis thaliana (Mouse-ear cress).